Here is a 497-residue protein sequence, read N- to C-terminus: Aspartyl/glutamyl-tRNA(Asn/Gln) amidotransferase subunit B (497 aa).

It belongs to the GatB/GatE family. GatB subfamily. As to quaternary structure, heterotrimer of A, B and C subunits.

The enzyme catalyses L-glutamyl-tRNA(Gln) + L-glutamine + ATP + H2O = L-glutaminyl-tRNA(Gln) + L-glutamate + ADP + phosphate + H(+). The catalysed reaction is L-aspartyl-tRNA(Asn) + L-glutamine + ATP + H2O = L-asparaginyl-tRNA(Asn) + L-glutamate + ADP + phosphate + 2 H(+). Its function is as follows. Allows the formation of correctly charged Asn-tRNA(Asn) or Gln-tRNA(Gln) through the transamidation of misacylated Asp-tRNA(Asn) or Glu-tRNA(Gln) in organisms which lack either or both of asparaginyl-tRNA or glutaminyl-tRNA synthetases. The reaction takes place in the presence of glutamine and ATP through an activated phospho-Asp-tRNA(Asn) or phospho-Glu-tRNA(Gln). The chain is Aspartyl/glutamyl-tRNA(Asn/Gln) amidotransferase subunit B from Novosphingobium aromaticivorans (strain ATCC 700278 / DSM 12444 / CCUG 56034 / CIP 105152 / NBRC 16084 / F199).